A 117-amino-acid chain; its full sequence is Fluoride-specific ion channel FluC 2 (117 aa).

4 helical membrane passes run 1–21 (MISI…RSAI), 33–53 (LPIA…LTIG), 60–80 (WFPA…STLA), and 95–115 (LFLN…YIGY). Positions 71 and 74 each coordinate Na(+).

Belongs to the fluoride channel Fluc/FEX (TC 1.A.43) family.

It is found in the cell membrane. It carries out the reaction fluoride(in) = fluoride(out). With respect to regulation, na(+) is not transported, but it plays an essential structural role and its presence is essential for fluoride channel function. Fluoride-specific ion channel. Important for reducing fluoride concentration in the cell, thus reducing its toxicity. The protein is Fluoride-specific ion channel FluC 2 of Staphylococcus aureus (strain COL).